The following is a 312-amino-acid chain: Heterotepalin-4 (312 aa).

The signal sequence occupies residues 1–22; the sequence is MKSMLVVTISVWLILAPTSTWA. 2 cysteine pairs are disulfide-bonded: Cys56-Cys280 and Cys107-Cys128. Glu197 is a catalytic residue. The propeptide occupies 284 to 312; the sequence is YNQNAMFPQLIMSTYYNYMANLGDLFEEF.

The enzyme catalyses Endohydrolysis of the N-glycosidic bond at one specific adenosine on the 28S rRNA.. In terms of biological role, inhibits protein synthesis in vitro. In Phytolacca heterotepala (Mexican pokeweed), this protein is Heterotepalin-4.